Consider the following 129-residue polypeptide: Small ribosomal subunit protein uS11 (129 aa).

It belongs to the universal ribosomal protein uS11 family. As to quaternary structure, part of the 30S ribosomal subunit. Interacts with proteins S7 and S18. Binds to IF-3.

Its function is as follows. Located on the platform of the 30S subunit, it bridges several disparate RNA helices of the 16S rRNA. Forms part of the Shine-Dalgarno cleft in the 70S ribosome. This is Small ribosomal subunit protein uS11 from Baumannia cicadellinicola subsp. Homalodisca coagulata.